The chain runs to 269 residues: Protein SirB1 (269 aa).

Belongs to the UPF0162 family.

In terms of biological role, required for maximal expression of sirC, not required to invade host cells. This chain is Protein SirB1 (sirB1), found in Salmonella typhi.